Reading from the N-terminus, the 480-residue chain is Argininosuccinate lyase (480 aa).

Polar residues predominate over residues 1-17 (MTDTTPSADLGASSQQP). Positions 1–24 (MTDTTPSADLGASSQQPAKAWSGR) are disordered.

The protein belongs to the lyase 1 family. Argininosuccinate lyase subfamily.

The protein resides in the cytoplasm. It catalyses the reaction 2-(N(omega)-L-arginino)succinate = fumarate + L-arginine. It functions in the pathway amino-acid biosynthesis; L-arginine biosynthesis; L-arginine from L-ornithine and carbamoyl phosphate: step 3/3. The sequence is that of Argininosuccinate lyase from Azoarcus sp. (strain BH72).